Here is a 364-residue protein sequence, read N- to C-terminus: MPSPTHLLNNFESSSSQGPPSYCLICCEVADGHHFGAAACRACAAFFRRTVQLNKVHDCPKNGQCFILSNVRNMCRACRYEKCLEVGMQRSSVQQKRDQLGRRDGLPTNREEPVLDTMRRAYEKLLVVRKKVHNRQENQLPRAISFNELQVVYQNEMTVIYQFLCEAFPEYSELLPDTKRSLFKNFFLPFTLLESSYYGYLTKQENVMLIPSGDYVDLAHLESYFNNNHHTFSQKDTISMFAQQFRMLHTSITVPLSAENVDVNEFLALAAIILWESDLEVEADRKNVQEEAVKIKSAIIKDLLFHYQSINVYADVAMRLGAVLSILPSIQRASHRFHEYMEIKNLLNLYALPKNLYDMFSPTS.

Positions proline 20–glutamine 95 form a DNA-binding region, nuclear receptor. 2 NR C4-type zinc fingers span residues cysteine 23–cysteine 43 and cysteine 59–cysteine 83. The NR LBD domain maps to arginine 110 to threonine 363.

It belongs to the nuclear hormone receptor family.

The protein resides in the nucleus. Orphan nuclear receptor. In Caenorhabditis elegans, this protein is Nuclear hormone receptor family member nhr-53 (nhr-53).